Consider the following 439-residue polypeptide: GTPase Obg (439 aa).

The region spanning 1–159 is the Obg domain; it reads MAFVDQAQIE…RNLKLELKVL (159 aa). The region spanning 160-336 is the OBG-type G domain; the sequence is ADVGLVGFPS…LMRLTADMLA (177 aa). Residues 166 to 173, 191 to 195, 213 to 216, 283 to 286, and 317 to 319 each bind GTP; these read GFPSAGKS, FTTLS, DLPG, TKMD, and SSI. Residues Ser-173 and Thr-193 each coordinate Mg(2+). Residues 338–357 are disordered; that stretch reads APAPESYRPETKNDTSEKSY. The span at 344 to 354 shows a compositional bias: basic and acidic residues; that stretch reads YRPETKNDTSE. The OCT domain occupies 358-439; the sequence is TFKPETHDFT…NSDFVFEFSE (82 aa).

This sequence belongs to the TRAFAC class OBG-HflX-like GTPase superfamily. OBG GTPase family. In terms of assembly, monomer. Requires Mg(2+) as cofactor.

It localises to the cytoplasm. Functionally, an essential GTPase which binds GTP, GDP and possibly (p)ppGpp with moderate affinity, with high nucleotide exchange rates and a fairly low GTP hydrolysis rate. Plays a role in control of the cell cycle, stress response, ribosome biogenesis and in those bacteria that undergo differentiation, in morphogenesis control. This is GTPase Obg from Leuconostoc mesenteroides subsp. mesenteroides (strain ATCC 8293 / DSM 20343 / BCRC 11652 / CCM 1803 / JCM 6124 / NCDO 523 / NBRC 100496 / NCIMB 8023 / NCTC 12954 / NRRL B-1118 / 37Y).